Here is a 267-residue protein sequence, read N- to C-terminus: MATGELGDLGGYYFRFLPQKTFQSLSSKEITSRLRQWSMLGRIKAQAFGFDQTFQSYRKDDFVMAFFKDPNVIPNLKLLSDSSGQWIILGTEVKKIEAINVPCTQLSMSFFHRLYDEDIVRDSGHIVKCLDSFCDPFLISDELRRVLLVEDSEKYEIFSQPDREEFLFCLFKHLCLGGALCQYEDVISPYLETTKLIYKDLVSVRKNPQTKKIQITSSVFKVSAYDSAGMCYPSAKNHEQTFSYFIVDPIRRHLHVLYHCYGVGDMS.

Belongs to the CFAP300 family. As to quaternary structure, interacts with DNAAF2. As to expression, expressed in nasal epithelial cells.

It localises to the cytoplasm. Its subcellular location is the cytoskeleton. It is found in the cilium axoneme. In terms of biological role, cilium- and flagellum-specific protein that plays a role in axonemal structure organization and motility. May play a role in outer and inner dynein arm assembly. In Homo sapiens (Human), this protein is Cilia- and flagella-associated protein 300.